The chain runs to 64 residues: Large ribosomal subunit protein uL30 (64 aa).

This sequence belongs to the universal ribosomal protein uL30 family. In terms of assembly, part of the 50S ribosomal subunit.

In Beijerinckia indica subsp. indica (strain ATCC 9039 / DSM 1715 / NCIMB 8712), this protein is Large ribosomal subunit protein uL30.